The primary structure comprises 141 residues: Large ribosomal subunit protein uL11 (141 aa).

The protein belongs to the universal ribosomal protein uL11 family. As to quaternary structure, part of the ribosomal stalk of the 50S ribosomal subunit. Interacts with L10 and the large rRNA to form the base of the stalk. L10 forms an elongated spine to which L12 dimers bind in a sequential fashion forming a multimeric L10(L12)X complex. Post-translationally, one or more lysine residues are methylated.

Functionally, forms part of the ribosomal stalk which helps the ribosome interact with GTP-bound translation factors. This Cyanothece sp. (strain PCC 7425 / ATCC 29141) protein is Large ribosomal subunit protein uL11.